The primary structure comprises 615 residues: Elongation factor 4 (615 aa).

Positions 17 to 198 constitute a tr-type G domain; that stretch reads ASIRNFCIIA…RVSRTIPAPV (182 aa). GTP contacts are provided by residues 29 to 34 and 145 to 148; these read DHGKST and NKID.

It belongs to the TRAFAC class translation factor GTPase superfamily. Classic translation factor GTPase family. LepA subfamily.

It localises to the cell membrane. It catalyses the reaction GTP + H2O = GDP + phosphate + H(+). Its function is as follows. Required for accurate and efficient protein synthesis under certain stress conditions. May act as a fidelity factor of the translation reaction, by catalyzing a one-codon backward translocation of tRNAs on improperly translocated ribosomes. Back-translocation proceeds from a post-translocation (POST) complex to a pre-translocation (PRE) complex, thus giving elongation factor G a second chance to translocate the tRNAs correctly. Binds to ribosomes in a GTP-dependent manner. In Clavibacter michiganensis subsp. michiganensis (strain NCPPB 382), this protein is Elongation factor 4.